We begin with the raw amino-acid sequence, 133 residues long: Large-conductance mechanosensitive channel (133 aa).

2 helical membrane-spanning segments follow: residues 19–39 (IDLA…TSLV) and 79–99 (IQSV…VKLI).

The protein belongs to the MscL family. As to quaternary structure, homopentamer.

It is found in the cell membrane. Functionally, channel that opens in response to stretch forces in the membrane lipid bilayer. May participate in the regulation of osmotic pressure changes within the cell. The sequence is that of Large-conductance mechanosensitive channel from Clostridium tetani (strain Massachusetts / E88).